The chain runs to 731 residues: Unconventional prefoldin RPB5 interactor-like protein (731 aa).

2 coiled-coil regions span residues 91–115 (RLKL…KLHT) and 143–176 (LAEH…LRKL). A compositionally biased stretch (polar residues) spans 205-217 (PLKSTNESSPKSL). 3 disordered regions span residues 205-224 (PLKS…EEDE), 259-302 (MSGE…EEEV), and 370-396 (ASEE…TVSE). Residues 220 to 258 (EEEDELWKKLEAEEQNEADELSSEAEESLKTTDNLVRQL) adopt a coiled-coil conformation. Residues 285–300 (ISEDDGDDDDEGDQEE) show a composition bias toward acidic residues. Coiled coils occupy residues 357 to 379 (DDLQ…EVVE) and 452 to 477 (SIKT…VKEN). 2 stretches are compositionally biased toward polar residues: residues 508–518 (GAIPSPSSDQS) and 575–599 (SQFS…TSND). Disordered regions lie at residues 508–527 (GAIP…KPSD), 567–682 (GSAY…DLRD), and 694–731 (VEKE…LNKT). The segment covering 611-621 (FYEKYEKDRAK) has biased composition (basic and acidic residues). Residues 623–644 (SKSNSSEGDATDPESATKSILR) are compositionally biased toward polar residues. The segment covering 661-673 (KKGRKVRNQKKKE) has biased composition (basic residues). Residues 721 to 731 (RFKEQRALNKT) show a composition bias toward basic and acidic residues.

The protein belongs to the RNA polymerase II subunit 5-mediating protein family. Interacts with serine/threonine-protein phosphatases flw/PP1beta9C and Pp1-87B with higher affinity for Pp1-87B.

Its subcellular location is the cytoplasm. The protein localises to the chromosome. It is found in the nucleus. Functionally, inhibits the activity of serine/threonine-protein phosphatases flw/PP1beta9C and Pp1-87B. Required for germ line cell viability and differentiation, normal transcriptional activity and maintenance of DNA integrity. This is Unconventional prefoldin RPB5 interactor-like protein from Drosophila melanogaster (Fruit fly).